Reading from the N-terminus, the 400-residue chain is Tryptophan 2,3-dioxygenase (400 aa).

Residues 75 to 79 and R146 each bind substrate; that span reads FIIIH. H332 is a binding site for heme. T346 provides a ligand contact to substrate.

The protein belongs to the tryptophan 2,3-dioxygenase family. As to quaternary structure, homotetramer. Dimer of dimers. Heme serves as cofactor.

It catalyses the reaction L-tryptophan + O2 = N-formyl-L-kynurenine. It functions in the pathway amino-acid degradation; L-tryptophan degradation via kynurenine pathway; L-kynurenine from L-tryptophan: step 1/2. Functionally, heme-dependent dioxygenase that catalyzes the oxidative cleavage of the L-tryptophan (L-Trp) pyrrole ring and converts L-tryptophan to N-formyl-L-kynurenine. Catalyzes the oxidative cleavage of the indole moiety. The sequence is that of Tryptophan 2,3-dioxygenase from Dictyostelium discoideum (Social amoeba).